The chain runs to 329 residues: Beta-ketoacyl-[acyl-carrier-protein] synthase III (329 aa).

Catalysis depends on residues C123 and H256. Residues Q257 to R261 form an ACP-binding region. N286 is an active-site residue.

This sequence belongs to the thiolase-like superfamily. FabH family. Homodimer.

The protein localises to the cytoplasm. The catalysed reaction is malonyl-[ACP] + acetyl-CoA + H(+) = 3-oxobutanoyl-[ACP] + CO2 + CoA. It functions in the pathway lipid metabolism; fatty acid biosynthesis. In terms of biological role, catalyzes the condensation reaction of fatty acid synthesis by the addition to an acyl acceptor of two carbons from malonyl-ACP. Catalyzes the first condensation reaction which initiates fatty acid synthesis and may therefore play a role in governing the total rate of fatty acid production. Possesses both acetoacetyl-ACP synthase and acetyl transacylase activities. Its substrate specificity determines the biosynthesis of branched-chain and/or straight-chain of fatty acids. This chain is Beta-ketoacyl-[acyl-carrier-protein] synthase III, found in Bordetella parapertussis (strain 12822 / ATCC BAA-587 / NCTC 13253).